Here is a 541-residue protein sequence, read N- to C-terminus: Amino-acid permease 2 (541 aa).

The segment covering 1-22 (MSFSPPNKSADATIQITEMTRQ) has biased composition (polar residues). Positions 1 to 43 (MSFSPPNKSADATIQITEMTRQGTPSSGEAAASTPSTSSTESG) are disordered. The segment covering 23-41 (GTPSSGEAAASTPSTSSTE) has biased composition (low complexity). The next 12 membrane-spanning stretches (helical) occupy residues 66–86 (FSFAMSISGVYGTLMSTWIYG), 90–110 (GGAAAIMWSWIIGGAGGWALA), 139–159 (VPFLCWIAGYLNLVGTVAGGA), 188–208 (VVGVMIGLTTIHAMINTLPTA), 214–234 (TSGYVVFHISVLLGACVTLLV), 255–275 (GWSPPGFAFLFGCLTPAWIMT), 301–321 (ATTFTYVIGFFFNLVLVVCMG), 347–367 (PAIFFTLCGFGVMNLVAIPGI), 399–419 (PLIAVWTYAVLEIIINLLGLA), 424–444 (IGAVFNVCTVALNVSYVIPII), 464–484 (VWVNAFAVAWNTFMAVIFFFP), and 496–516 (YAIVVFFFVLIFALVFWYTHG).

It belongs to the amino acid-polyamine-organocation (APC) superfamily.

The protein resides in the membrane. In Neurospora crassa (strain ATCC 24698 / 74-OR23-1A / CBS 708.71 / DSM 1257 / FGSC 987), this protein is Amino-acid permease 2 (aap-2).